We begin with the raw amino-acid sequence, 152 residues long: Aspartate carbamoyltransferase regulatory chain (152 aa).

Positions 108, 113, 136, and 139 each coordinate Zn(2+).

This sequence belongs to the PyrI family. As to quaternary structure, contains catalytic and regulatory chains. Zn(2+) serves as cofactor.

In terms of biological role, involved in allosteric regulation of aspartate carbamoyltransferase. In Pyrococcus furiosus (strain ATCC 43587 / DSM 3638 / JCM 8422 / Vc1), this protein is Aspartate carbamoyltransferase regulatory chain.